A 123-amino-acid polypeptide reads, in one-letter code: Small ribosomal subunit protein uS12c (123 aa).

Belongs to the universal ribosomal protein uS12 family. Part of the 30S ribosomal subunit.

It is found in the plastid. The protein localises to the chloroplast. With S4 and S5 plays an important role in translational accuracy. Located at the interface of the 30S and 50S subunits. The sequence is that of Small ribosomal subunit protein uS12c (rps12) from Physcomitrium patens (Spreading-leaved earth moss).